A 475-amino-acid chain; its full sequence is ATP synthase subunit beta 1 (475 aa).

152-159 provides a ligand contact to ATP; the sequence is GGAGVGKT.

Belongs to the ATPase alpha/beta chains family. As to quaternary structure, F-type ATPases have 2 components, CF(1) - the catalytic core - and CF(0) - the membrane proton channel. CF(1) has five subunits: alpha(3), beta(3), gamma(1), delta(1), epsilon(1). CF(0) has four main subunits: a(1), b(1), b'(1) and c(9-12).

It is found in the cell inner membrane. The enzyme catalyses ATP + H2O + 4 H(+)(in) = ADP + phosphate + 5 H(+)(out). In terms of biological role, produces ATP from ADP in the presence of a proton gradient across the membrane. The catalytic sites are hosted primarily by the beta subunits. The protein is ATP synthase subunit beta 1 of Cereibacter sphaeroides (strain ATCC 17029 / ATH 2.4.9) (Rhodobacter sphaeroides).